We begin with the raw amino-acid sequence, 829 residues long: Periplasmic nitrate reductase (829 aa).

The tat-type signal signal peptide spans 1–27; the sequence is MNRRDFMKANAVIAAASAAGLALPAGA. One can recognise a 4Fe-4S Mo/W bis-MGD-type domain in the interval 39-95; sequence LEWNKAPCRFCGTGCSVMVATREGKVVATHGDANSEVNRGLSCIKGYFLSKIMYGRD. The [4Fe-4S] cluster site is built by Cys46, Cys49, Cys53, and Cys81. Mo-bis(molybdopterin guanine dinucleotide) contacts are provided by residues Lys83, Gln150, Asn175, Cys179, 212-219, 243-247, 262-264, Met373, Gln377, Asn483, 509-510, Lys532, Asp559, and 719-728; these read WGSNMAEM, STFEH, QTD, SD, and TGRVLEHWHS. Trp795 serves as a coordination point for substrate. Mo-bis(molybdopterin guanine dinucleotide) contacts are provided by Asn803 and Lys820.

It belongs to the prokaryotic molybdopterin-containing oxidoreductase family. NasA/NapA/NarB subfamily. As to quaternary structure, component of the periplasmic nitrate reductase NapAB complex composed of NapA and NapB. [4Fe-4S] cluster serves as cofactor. It depends on Mo-bis(molybdopterin guanine dinucleotide) as a cofactor. Predicted to be exported by the Tat system. The position of the signal peptide cleavage has not been experimentally proven.

The protein resides in the periplasm. It carries out the reaction 2 Fe(II)-[cytochrome] + nitrate + 2 H(+) = 2 Fe(III)-[cytochrome] + nitrite + H2O. In terms of biological role, catalytic subunit of the periplasmic nitrate reductase complex NapAB. Receives electrons from NapB and catalyzes the reduction of nitrate to nitrite. The chain is Periplasmic nitrate reductase from Shewanella denitrificans (strain OS217 / ATCC BAA-1090 / DSM 15013).